The chain runs to 93 residues: Integration host factor subunit beta (93 aa).

The protein belongs to the bacterial histone-like protein family. As to quaternary structure, heterodimer of an alpha and a beta chain.

Functionally, this protein is one of the two subunits of integration host factor, a specific DNA-binding protein that functions in genetic recombination as well as in transcriptional and translational control. This Cereibacter sphaeroides (strain ATCC 17023 / DSM 158 / JCM 6121 / CCUG 31486 / LMG 2827 / NBRC 12203 / NCIMB 8253 / ATH 2.4.1.) (Rhodobacter sphaeroides) protein is Integration host factor subunit beta (ihfB).